Consider the following 182-residue polypeptide: ATP synthase subunit delta (182 aa).

This sequence belongs to the ATPase delta chain family. As to quaternary structure, F-type ATPases have 2 components, F(1) - the catalytic core - and F(0) - the membrane proton channel. F(1) has five subunits: alpha(3), beta(3), gamma(1), delta(1), epsilon(1). CF(0) has four main subunits: a(1), b(1), b'(1) and c(10-14). The alpha and beta chains form an alternating ring which encloses part of the gamma chain. F(1) is attached to F(0) by a central stalk formed by the gamma and epsilon chains, while a peripheral stalk is formed by the delta, b and b' chains.

Its subcellular location is the cellular thylakoid membrane. Its function is as follows. F(1)F(0) ATP synthase produces ATP from ADP in the presence of a proton or sodium gradient. F-type ATPases consist of two structural domains, F(1) containing the extramembraneous catalytic core and F(0) containing the membrane proton channel, linked together by a central stalk and a peripheral stalk. During catalysis, ATP synthesis in the catalytic domain of F(1) is coupled via a rotary mechanism of the central stalk subunits to proton translocation. This protein is part of the stalk that links CF(0) to CF(1). It either transmits conformational changes from CF(0) to CF(1) or is implicated in proton conduction. The sequence is that of ATP synthase subunit delta from Synechococcus sp. (strain WH7803).